Here is a 160-residue protein sequence, read N- to C-terminus: NAD(P)H-quinone oxidoreductase subunit I, chloroplastic (160 aa).

2 4Fe-4S ferredoxin-type domains span residues Gly-55–Lys-84 and Leu-95–Glu-124. Positions 64, 67, 70, 74, 104, 107, 110, and 114 each coordinate [4Fe-4S] cluster.

The protein belongs to the complex I 23 kDa subunit family. In terms of assembly, NDH is composed of at least 16 different subunits, 5 of which are encoded in the nucleus. [4Fe-4S] cluster is required as a cofactor.

The protein localises to the plastid. It is found in the chloroplast thylakoid membrane. The catalysed reaction is a plastoquinone + NADH + (n+1) H(+)(in) = a plastoquinol + NAD(+) + n H(+)(out). It carries out the reaction a plastoquinone + NADPH + (n+1) H(+)(in) = a plastoquinol + NADP(+) + n H(+)(out). Its function is as follows. NDH shuttles electrons from NAD(P)H:plastoquinone, via FMN and iron-sulfur (Fe-S) centers, to quinones in the photosynthetic chain and possibly in a chloroplast respiratory chain. The immediate electron acceptor for the enzyme in this species is believed to be plastoquinone. Couples the redox reaction to proton translocation, and thus conserves the redox energy in a proton gradient. This chain is NAD(P)H-quinone oxidoreductase subunit I, chloroplastic, found in Cucumis sativus (Cucumber).